The chain runs to 217 residues: Thiamine-phosphate synthase (217 aa).

Residues 41 to 45 (QYRDK) and asparagine 76 contribute to the 4-amino-2-methyl-5-(diphosphooxymethyl)pyrimidine site. Positions 77 and 96 each coordinate Mg(2+). Serine 115 contributes to the 4-amino-2-methyl-5-(diphosphooxymethyl)pyrimidine binding site. Position 142-144 (142-144 (SPS)) interacts with 2-[(2R,5Z)-2-carboxy-4-methylthiazol-5(2H)-ylidene]ethyl phosphate. Lysine 145 provides a ligand contact to 4-amino-2-methyl-5-(diphosphooxymethyl)pyrimidine. Residues glycine 172 and 192–193 (IS) each bind 2-[(2R,5Z)-2-carboxy-4-methylthiazol-5(2H)-ylidene]ethyl phosphate.

It belongs to the thiamine-phosphate synthase family. Mg(2+) is required as a cofactor.

The catalysed reaction is 2-[(2R,5Z)-2-carboxy-4-methylthiazol-5(2H)-ylidene]ethyl phosphate + 4-amino-2-methyl-5-(diphosphooxymethyl)pyrimidine + 2 H(+) = thiamine phosphate + CO2 + diphosphate. It catalyses the reaction 2-(2-carboxy-4-methylthiazol-5-yl)ethyl phosphate + 4-amino-2-methyl-5-(diphosphooxymethyl)pyrimidine + 2 H(+) = thiamine phosphate + CO2 + diphosphate. The enzyme catalyses 4-methyl-5-(2-phosphooxyethyl)-thiazole + 4-amino-2-methyl-5-(diphosphooxymethyl)pyrimidine + H(+) = thiamine phosphate + diphosphate. The protein operates within cofactor biosynthesis; thiamine diphosphate biosynthesis; thiamine phosphate from 4-amino-2-methyl-5-diphosphomethylpyrimidine and 4-methyl-5-(2-phosphoethyl)-thiazole: step 1/1. In terms of biological role, condenses 4-methyl-5-(beta-hydroxyethyl)thiazole monophosphate (THZ-P) and 2-methyl-4-amino-5-hydroxymethyl pyrimidine pyrophosphate (HMP-PP) to form thiamine monophosphate (TMP). This is Thiamine-phosphate synthase from Acidithiobacillus ferrooxidans (strain ATCC 23270 / DSM 14882 / CIP 104768 / NCIMB 8455) (Ferrobacillus ferrooxidans (strain ATCC 23270)).